The sequence spans 160 residues: MGVTKKPDLNDPVLRAKLAKGMGHNYYGEPAWPNDLLYIFPVVILGTIACNVGLAVLEPSMIGEPADPFATPLEILPEWYFFPVFQILRTVPNKLLGVLLMVSVPTGLLTVPFLENVNKFQNPFRRPVATTVFLIGTAVALWLGIGATLPIDKSLTLGLF.

Transmembrane regions (helical) follow at residues L36–V56, L95–E115, and T131–I151.

This sequence belongs to the cytochrome b family. PetD subfamily. In terms of assembly, the 4 large subunits of the cytochrome b6-f complex are cytochrome b6, subunit IV (17 kDa polypeptide, petD), cytochrome f and the Rieske protein, while the 4 small subunits are petG, petL, petM and petN. The complex functions as a dimer.

The protein resides in the plastid. It localises to the chloroplast thylakoid membrane. Functionally, component of the cytochrome b6-f complex, which mediates electron transfer between photosystem II (PSII) and photosystem I (PSI), cyclic electron flow around PSI, and state transitions. The protein is Cytochrome b6-f complex subunit 4 of Saccharum hybrid (Sugarcane).